The following is a 261-amino-acid chain: Guanine nucleotide exchange factor BopE (261 aa).

The protein belongs to the GEF (guanine exchange factor) SopE family. In terms of assembly, monomer. Interacts with human CDC42.

It localises to the secreted. Activator for both CDC42 and RAC1 by directly interacting with these Rho GTPases and acting as a guanine nucleotide exchange factor (GEF). This activation results in actin cytoskeleton rearrangements and stimulates membrane ruffling, thus promoting bacterial entry into non-phagocytic cells. This chain is Guanine nucleotide exchange factor BopE (bopE), found in Burkholderia mallei (strain NCTC 10247).